The chain runs to 331 residues: DNA-directed RNA polymerase subunit alpha (331 aa).

The segment at 1–232 (MQGTFRDFLK…DQLSVFVDLE (232 aa)) is alpha N-terminal domain (alpha-NTD). Residues 247 to 331 (VDPILLRPID…AGLGEDRVVG (85 aa)) are alpha C-terminal domain (alpha-CTD).

This sequence belongs to the RNA polymerase alpha chain family. Homodimer. The RNAP catalytic core consists of 2 alpha, 1 beta, 1 beta' and 1 omega subunit. When a sigma factor is associated with the core the holoenzyme is formed, which can initiate transcription.

It carries out the reaction RNA(n) + a ribonucleoside 5'-triphosphate = RNA(n+1) + diphosphate. Its function is as follows. DNA-dependent RNA polymerase catalyzes the transcription of DNA into RNA using the four ribonucleoside triphosphates as substrates. The chain is DNA-directed RNA polymerase subunit alpha from Alkalilimnicola ehrlichii (strain ATCC BAA-1101 / DSM 17681 / MLHE-1).